The chain runs to 582 residues: Pescadillo homolog (582 aa).

A coiled-coil region spans residues 277–329 (LSALSASLARVVATVEEEENQLDNFPTEEEDQENMQAREKEQKEQEAQKRLFE). The span at 294–309 (EENQLDNFPTEEEDQE) shows a compositional bias: acidic residues. Positions 294 to 317 (EENQLDNFPTEEEDQENMQAREKE) are disordered. Residues 323–416 (AQKRLFEGLK…MRLPVEDYFL (94 aa)) form the BRCT domain. Over residues 445–454 (ALQRGEKPVQ) the composition is skewed to basic and acidic residues. 2 disordered regions span residues 445–511 (ALQR…ETGS) and 554–582 (REVNKLTAKRKAHEDASKAQKKQKKAKKQ). A compositionally biased stretch (acidic residues) spans 455-477 (EEDEEEEDEDEEEDDDVDDEEFT). Positions 478–490 (EEKNLKKMEDTRA) are enriched in basic and acidic residues. A coiled-coil region spans residues 517-582 (RLEQEEKAEE…QKKQKKAKKQ (66 aa)). A compositionally biased stretch (basic residues) spans 572–582 (AQKKQKKAKKQ).

Belongs to the pescadillo family. Component of the PeBoW complex, composed of bop1, pes1 and wdr12. The complex is held together by bop1, which interacts with pes1 via its N-terminal domain and with wdr12 via a high-affinity interaction between the seven-bladed beta-propeller domains of the 2 proteins. The PeBoW complex associates with the 66S pre-ribosome.

It localises to the nucleus. The protein resides in the nucleolus. The protein localises to the nucleoplasm. Its function is as follows. Component of the PeBoW complex, which is required for maturation of 28S and 5.8S ribosomal RNAs and formation of the 60S ribosome. The protein is Pescadillo homolog (pes1) of Salmo salar (Atlantic salmon).